The primary structure comprises 25 residues: Dermaseptin-5.1TR (25 aa).

Valine 25 carries the post-translational modification Valine amide.

As to expression, expressed by the skin glands.

The protein localises to the secreted. Functionally, has antimicrobial activity. The sequence is that of Dermaseptin-5.1TR from Phyllomedusa trinitatis (Trinidad leaf frog).